A 204-amino-acid polypeptide reads, in one-letter code: Holliday junction branch migration complex subunit RuvA (204 aa).

A domain I region spans residues 1–64 (MIARLRGTLL…EDGQTLFGFR (64 aa)). A domain II region spans residues 65–143 (TRAERDLFRR…GVGGGSTAAP (79 aa)). The interval 144 to 153 (AAGADHPTGE) is flexible linker. The segment at 153–204 (ENDPVSEAIEGLVALGYKPPEAARMARNAAEPELGCEAIIRRALQRAVPRGG) is domain III.

The protein belongs to the RuvA family. As to quaternary structure, homotetramer. Forms an RuvA(8)-RuvB(12)-Holliday junction (HJ) complex. HJ DNA is sandwiched between 2 RuvA tetramers; dsDNA enters through RuvA and exits via RuvB. An RuvB hexamer assembles on each DNA strand where it exits the tetramer. Each RuvB hexamer is contacted by two RuvA subunits (via domain III) on 2 adjacent RuvB subunits; this complex drives branch migration. In the full resolvosome a probable DNA-RuvA(4)-RuvB(12)-RuvC(2) complex forms which resolves the HJ.

The protein resides in the cytoplasm. The RuvA-RuvB-RuvC complex processes Holliday junction (HJ) DNA during genetic recombination and DNA repair, while the RuvA-RuvB complex plays an important role in the rescue of blocked DNA replication forks via replication fork reversal (RFR). RuvA specifically binds to HJ cruciform DNA, conferring on it an open structure. The RuvB hexamer acts as an ATP-dependent pump, pulling dsDNA into and through the RuvAB complex. HJ branch migration allows RuvC to scan DNA until it finds its consensus sequence, where it cleaves and resolves the cruciform DNA. This chain is Holliday junction branch migration complex subunit RuvA, found in Halorhodospira halophila (strain DSM 244 / SL1) (Ectothiorhodospira halophila (strain DSM 244 / SL1)).